An 893-amino-acid polypeptide reads, in one-letter code: DNA gyrase subunit A (893 aa).

The region spanning Leu35–Leu501 is the Topo IIA-type catalytic domain. Residue Tyr123 is the O-(5'-phospho-DNA)-tyrosine intermediate of the active site. The GyrA-box signature appears at Gln528–Gly534. The segment at Val810–Glu893 is disordered. Composition is skewed to acidic residues over residues Glu812–Asp821 and Asp852–Glu862. The span at Asn863–Glu879 shows a compositional bias: basic and acidic residues. Acidic residues predominate over residues Asp880–Glu893.

It belongs to the type II topoisomerase GyrA/ParC subunit family. In terms of assembly, heterotetramer, composed of two GyrA and two GyrB chains. In the heterotetramer, GyrA contains the active site tyrosine that forms a transient covalent intermediate with DNA, while GyrB binds cofactors and catalyzes ATP hydrolysis.

It localises to the cytoplasm. It carries out the reaction ATP-dependent breakage, passage and rejoining of double-stranded DNA.. A type II topoisomerase that negatively supercoils closed circular double-stranded (ds) DNA in an ATP-dependent manner to modulate DNA topology and maintain chromosomes in an underwound state. Negative supercoiling favors strand separation, and DNA replication, transcription, recombination and repair, all of which involve strand separation. Also able to catalyze the interconversion of other topological isomers of dsDNA rings, including catenanes and knotted rings. Type II topoisomerases break and join 2 DNA strands simultaneously in an ATP-dependent manner. The polypeptide is DNA gyrase subunit A (Staphylococcus epidermidis (strain ATCC 35984 / DSM 28319 / BCRC 17069 / CCUG 31568 / BM 3577 / RP62A)).